Reading from the N-terminus, the 3933-residue chain is Protein DOP1 homolog PFC0245c (3933 aa).

A run of 4 helical transmembrane segments spans residues 70 to 90, 98 to 118, 140 to 160, and 163 to 183; these read LNPL…SSIF, FINN…HCTI, IFAY…NNIL, and IYSI…WLLL. Disordered stretches follow at residues 468 to 494, 543 to 600, and 614 to 656; these read RLNN…KYQG, ININ…NMLH, and KKIN…SSSS. A compositionally biased stretch (low complexity) spans 470–486; the sequence is NNNNNNNNNNNNNNNNN. The segment covering 546–561 has biased composition (acidic residues); the sequence is NDDDNLNYDDNEDDEY. 2 stretches are compositionally biased toward low complexity: residues 563–576 and 585–597; these read NYHN…NYFN and ENNN…NNNN. The stretch at 620-651 forms a coiled coil; sequence GQTNNYDDDEEEEDEEEEDNNNNTSYNNNNNN. Positions 625-639 are enriched in acidic residues; it reads YDDDEEEEDEEEEDN. The segment covering 640-656 has biased composition (low complexity); sequence NNNTSYNNNNNNSSSSS. Helical transmembrane passes span 782 to 802, 842 to 862, and 1186 to 1206; these read MLNL…YTFY, YLYI…MNFL, and FYFW…KSLL. Residues 1216–1255 are compositionally biased toward acidic residues; it reads DDTDDDDDDDDDDDDEEEDDDDEDDDDEDDEEEDDEEDLG. 2 disordered regions span residues 1216 to 1284 and 1361 to 1405; these read DDTD…MNKK and TNNN…NNFN. A compositionally biased stretch (basic residues) spans 1263–1284; the sequence is SSKKGKKKKKKSVHKNKLMNKK. Residues 1349–1403 adopt a coiled-coil conformation; it reads ELNKMKYMNEDITNNNNNINNNSNNNNNNKNNINNNNNNNNNNNNNNNNLNNLNN. Low complexity predominate over residues 1362–1405; the sequence is NNNNNINNNSNNNNNNKNNINNNNNNNNNNNNNNNNLNNLNNFN. Helical transmembrane passes span 1462 to 1482 and 1997 to 2017; these read FIKL…MFCL and KNIF…KLIY. The tract at residues 2691-2739 is disordered; the sequence is HRRKMNRQNIRTDSSNNNNNNNINSNNNNNNNNNNNNNNNNNNNNNIYN. Low complexity predominate over residues 2704 to 2739; it reads SSNNNNNNNINSNNNNNNNNNNNNNNNNNNNNNIYN. The next 5 membrane-spanning stretches (helical) occupy residues 2860-2880, 2905-2925, 3017-3037, 3200-3220, and 3276-3296; these read INLN…CTLT, IMSS…HIYV, YSEI…YHTV, ILIL…YIII, and IIIN…SWIF. Positions 3620 to 3646 are disordered; the sequence is LKNEKSTRTYNSSLQEGSDYDEEEDEE. The segment covering 3637–3646 has biased composition (acidic residues); it reads SDYDEEEDEE. Residues 3897 to 3925 adopt a coiled-coil conformation; that stretch reads KEETIILLKELNSVENDINDLFLEVDLNE.

Belongs to the DOP1 family.

The protein resides in the membrane. Its function is as follows. May be involved in protein traffic between late Golgi and early endosomes. This chain is Protein DOP1 homolog PFC0245c, found in Plasmodium falciparum (isolate 3D7).